Here is a 457-residue protein sequence, read N- to C-terminus: UDP-N-acetylmuramate--L-alanyl-gamma-D-glutamyl-meso-2,6-diaminoheptandioate ligase (457 aa).

110 to 116 contacts ATP; that stretch reads GTHGKTT.

This sequence belongs to the MurCDEF family. Mpl subfamily. Mg(2+) serves as cofactor.

It localises to the secreted. The enzyme catalyses UDP-N-acetyl-alpha-D-muramate + L-alanyl-gamma-D-glutamyl-meso-2,6-diaminopimelate + ATP = UDP-N-acetyl-alpha-D-muramoyl-L-alanyl-gamma-D-glutamyl-meso-2,6-diaminopimelate + ADP + phosphate + H(+). It functions in the pathway cell wall biogenesis; peptidoglycan recycling. Reutilizes the intact tripeptide L-alanyl-gamma-D-glutamyl-meso-diaminopimelate by linking it to UDP-N-acetylmuramate. The enzyme can also use the tetrapeptide L-alanyl-gamma-D-glutamyl-meso-2,6-diaminoheptanedioyl-D-alanine or the pentapeptide L-alanyl-gamma-D-glutamyl-meso-2,6-diaminoheptandioyl-D-alanyl-D-alanine in vivo and in vitro. The chain is UDP-N-acetylmuramate--L-alanyl-gamma-D-glutamyl-meso-2,6-diaminoheptandioate ligase from Escherichia coli (strain K12).